Here is a 299-residue protein sequence, read N- to C-terminus: MSLRVSMRAFSLSSRVCARSGSKFSFGDLSKVKLRAPIIPTHKNFDVSPDHPLWAFFPEGNNTETALRSGDELDMNSREWTFAELRRKSFEDLHKLWYLTLKERNILAREVRLAESLRYSRTQQHDALDEKLVTVQKRIKQVLLERQVAHERVQTFTQQQQQYLTEFEERYLNASEHEIVSFNEKLVRLQYAFFGIEPQLQDYDLEDINIKFVEGLSFVANLKVKRYLKQNPAQEQEFELPLNGVVEELPFLLRNVTEAIEEVKALRQSGESVKLDKIDVFPFLRSALSNAIEQEELDQ.

The protein belongs to the universal ribosomal protein uL29 family. In terms of assembly, component of the mitochondrial large ribosomal subunit. Mature mitochondrial ribosomes consist of a small (37S) and a large (54S) subunit. The 37S subunit contains at least 33 different proteins and 1 molecule of RNA (15S). The 54S subunit contains at least 45 different proteins and 1 molecule of RNA (21S).

Its subcellular location is the mitochondrion. This Scheffersomyces stipitis (strain ATCC 58785 / CBS 6054 / NBRC 10063 / NRRL Y-11545) (Yeast) protein is Large ribosomal subunit protein uL29m (MRPL4).